A 484-amino-acid chain; its full sequence is tRNA sulfurtransferase (484 aa).

Residues 61–165 (ILLVELLGRI…NDKMMLIKAR (105 aa)) form the THUMP domain. ATP is bound by residues 183–184 (LI), K265, G287, and Q296. A disulfide bridge links C344 with C456. In terms of domain architecture, Rhodanese spans 404–484 (LSANDVILDI…DNVKVLNKIS (81 aa)). The Cysteine persulfide intermediate role is filled by C456.

The protein belongs to the ThiI family.

Its subcellular location is the cytoplasm. The enzyme catalyses [ThiI sulfur-carrier protein]-S-sulfanyl-L-cysteine + a uridine in tRNA + 2 reduced [2Fe-2S]-[ferredoxin] + ATP + H(+) = [ThiI sulfur-carrier protein]-L-cysteine + a 4-thiouridine in tRNA + 2 oxidized [2Fe-2S]-[ferredoxin] + AMP + diphosphate. It carries out the reaction [ThiS sulfur-carrier protein]-C-terminal Gly-Gly-AMP + S-sulfanyl-L-cysteinyl-[cysteine desulfurase] + AH2 = [ThiS sulfur-carrier protein]-C-terminal-Gly-aminoethanethioate + L-cysteinyl-[cysteine desulfurase] + A + AMP + 2 H(+). Its pathway is cofactor biosynthesis; thiamine diphosphate biosynthesis. Its function is as follows. Catalyzes the ATP-dependent transfer of a sulfur to tRNA to produce 4-thiouridine in position 8 of tRNAs, which functions as a near-UV photosensor. Also catalyzes the transfer of sulfur to the sulfur carrier protein ThiS, forming ThiS-thiocarboxylate. This is a step in the synthesis of thiazole, in the thiamine biosynthesis pathway. The sulfur is donated as persulfide by IscS. In Histophilus somni (strain 129Pt) (Haemophilus somnus), this protein is tRNA sulfurtransferase.